The following is a 92-amino-acid chain: Em-like protein GEA6 (92 aa).

Composition is skewed to basic and acidic residues over residues 1–18 (MASQ…KKGE) and 37–51 (AEGR…KEQL). The tract at residues 1–92 (MASQQEKKQL…IDESKFRTKT (92 aa)) is disordered.

It belongs to the small hydrophilic plant seed protein family. As to expression, present only in nearly dry and dry seeds.

Its function is as follows. It is thought to provide protection for the cytoplasm during the desiccation stage of embryo development. The chain is Em-like protein GEA6 (EM6) from Arabidopsis thaliana (Mouse-ear cress).